The following is a 223-amino-acid chain: Glycoprotein 42 (223 aa).

Residues 1-8 (MVSFKQVR) are Intravirion-facing. Residues 9–29 (VPLFTAIALVIVLLLAYFLPP) form a helical membrane-spanning segment. Topologically, residues 30-223 (RVRGGGRVAA…CLCVSQRSNS (194 aa)) are virion surface. Cystine bridges form between Cys-99–Cys-138, Cys-102–Cys-115, Cys-128–Cys-214, Cys-132–Cys-216, and Cys-192–Cys-208. Residues 111-217 (YKGCCFYFTK…CSFLKPCLCV (107 aa)) form the C-type lectin domain.

It belongs to the epstein barr virus gp42 family. Forms a complex with gp25 and gp85 via its N-terminus; this complex is used for invasion of B-lymphocytes. Interacts with human HLA-DRA and HLA-DRB1.

The protein localises to the virion membrane. Its subcellular location is the host membrane. Functionally, plays a role in virion attachment to host B-lymphocytes, through binding to leukocyte antigen (HLA) class II and subsequently participates in fusion of the virion with host membranes. May act as a tropism switch that directs fusion with B-lymphocytes and inhibits fusion with epithelial cells. Additionally, hampers T-cell recognition via HLA class II molecules through steric hindrance of T-cell receptor-class II-peptide interaction. Its function is as follows. Soluble gp42 inhibits HLA class II-restricted antigen presentation to T-cells through binding to immature and mature HLA class II complexes. The chain is Glycoprotein 42 from Epstein-Barr virus (strain B95-8) (HHV-4).